Reading from the N-terminus, the 221-residue chain is Phosphoribosylformylglycinamidine synthase subunit PurQ (221 aa).

The Glutamine amidotransferase type-1 domain maps to 8–221 (NVGIIRFPGT…GLKFFKSFLD (214 aa)). Residue cysteine 91 is the Nucleophile of the active site. Residues histidine 198 and glutamate 200 contribute to the active site.

In terms of assembly, part of the FGAM synthase complex composed of 1 PurL, 1 PurQ and 2 PurS subunits.

It is found in the cytoplasm. It carries out the reaction N(2)-formyl-N(1)-(5-phospho-beta-D-ribosyl)glycinamide + L-glutamine + ATP + H2O = 2-formamido-N(1)-(5-O-phospho-beta-D-ribosyl)acetamidine + L-glutamate + ADP + phosphate + H(+). The catalysed reaction is L-glutamine + H2O = L-glutamate + NH4(+). It functions in the pathway purine metabolism; IMP biosynthesis via de novo pathway; 5-amino-1-(5-phospho-D-ribosyl)imidazole from N(2)-formyl-N(1)-(5-phospho-D-ribosyl)glycinamide: step 1/2. Part of the phosphoribosylformylglycinamidine synthase complex involved in the purines biosynthetic pathway. Catalyzes the ATP-dependent conversion of formylglycinamide ribonucleotide (FGAR) and glutamine to yield formylglycinamidine ribonucleotide (FGAM) and glutamate. The FGAM synthase complex is composed of three subunits. PurQ produces an ammonia molecule by converting glutamine to glutamate. PurL transfers the ammonia molecule to FGAR to form FGAM in an ATP-dependent manner. PurS interacts with PurQ and PurL and is thought to assist in the transfer of the ammonia molecule from PurQ to PurL. The sequence is that of Phosphoribosylformylglycinamidine synthase subunit PurQ from Methanosphaera stadtmanae (strain ATCC 43021 / DSM 3091 / JCM 11832 / MCB-3).